Here is a 427-residue protein sequence, read N- to C-terminus: Glutamate-1-semialdehyde 2,1-aminomutase (427 aa).

Position 265 is an N6-(pyridoxal phosphate)lysine (K265).

Belongs to the class-III pyridoxal-phosphate-dependent aminotransferase family. HemL subfamily. As to quaternary structure, homodimer. The cofactor is pyridoxal 5'-phosphate.

It localises to the cytoplasm. The catalysed reaction is (S)-4-amino-5-oxopentanoate = 5-aminolevulinate. The protein operates within porphyrin-containing compound metabolism; protoporphyrin-IX biosynthesis; 5-aminolevulinate from L-glutamyl-tRNA(Glu): step 2/2. This Bordetella petrii (strain ATCC BAA-461 / DSM 12804 / CCUG 43448) protein is Glutamate-1-semialdehyde 2,1-aminomutase.